Consider the following 524-residue polypeptide: Probable glutamyl-tRNA reductase 3, chloroplastic (524 aa).

The transit peptide at 1 to 52 (MAVSNASVVLSPNLETSSSWYHHNPSSSLDLIRIHTLPMNKMTRRGLIQRVR) directs the protein to the chloroplast. Substrate contacts are provided by residues 129–132 (TCNR), serine 189, 194–196 (ENQ), and glutamine 200. The Nucleophile role is filled by cysteine 130. NADP(+) is bound at residue 269-274 (GAGEMG).

Belongs to the glutamyl-tRNA reductase family.

It is found in the plastid. The protein resides in the chloroplast. It carries out the reaction (S)-4-amino-5-oxopentanoate + tRNA(Glu) + NADP(+) = L-glutamyl-tRNA(Glu) + NADPH + H(+). Its pathway is porphyrin-containing compound metabolism; protoporphyrin-IX biosynthesis; 5-aminolevulinate from L-glutamyl-tRNA(Glu): step 1/2. The protein operates within porphyrin-containing compound metabolism; chlorophyll biosynthesis. Functionally, catalyzes the NADPH-dependent reduction of glutamyl-tRNA(Glu) to glutamate 1-semialdehyde (GSA). In Arabidopsis thaliana (Mouse-ear cress), this protein is Probable glutamyl-tRNA reductase 3, chloroplastic (HEMA3).